We begin with the raw amino-acid sequence, 236 residues long: Small ribosomal subunit protein uS2c (236 aa).

The protein belongs to the universal ribosomal protein uS2 family.

Its subcellular location is the plastid. It is found in the chloroplast. This Coffea arabica (Arabian coffee) protein is Small ribosomal subunit protein uS2c (rps2).